The sequence spans 311 residues: Cadmium, cobalt and zinc/H(+)-K(+) antiporter (311 aa).

The Extracellular segment spans residues 1–12 (MGHNHNEGANKK). Residues 13–33 (VLLISFIMITGYMIIEAIGGF) form a helical membrane-spanning segment. Topologically, residues 34 to 43 (LTNSLALLSD) are cytoplasmic. A helical membrane pass occupies residues 44-64 (AGHMLSDSISLMVALIAFTLA). At 65 to 78 (EKKANHNKTFGYKR) the chain is on the extracellular side. A helical membrane pass occupies residues 79–99 (FEILAAVINGAALILISLYII). Residues 100-115 (YEAIERFSNPPKVATT) lie on the Cytoplasmic side of the membrane. A helical membrane pass occupies residues 116–136 (GMLTISIIGLVVNLLVAWIMM). Residues 137–157 (SGGDTKNNLNIRGAYLHVISD) lie on the Extracellular side of the membrane. The helical transmembrane segment at 158 to 178 (MLGSVGAILAAILIIFFGWGW) threads the bilayer. The Cytoplasmic portion of the chain corresponds to 179–311 (ADPLASIIVA…MEKQRDHHHH (133 aa)).

Belongs to the cation diffusion facilitator (CDF) transporter (TC 2.A.4) family. SLC30A subfamily.

It is found in the cell membrane. Functionally, involved in divalent cation and potassium homeostasis in the cell. Catalyzes the active efflux of zinc, cadmium and cobalt, in exchange for potassium and H(+) ions. This Bacillus subtilis (strain 168) protein is Cadmium, cobalt and zinc/H(+)-K(+) antiporter (czcD).